A 187-amino-acid polypeptide reads, in one-letter code: V-type ATP synthase subunit E (187 aa).

This sequence belongs to the V-ATPase E subunit family.

Functionally, produces ATP from ADP in the presence of a proton gradient across the membrane. This chain is V-type ATP synthase subunit E, found in Clostridioides difficile (strain 630) (Peptoclostridium difficile).